We begin with the raw amino-acid sequence, 316 residues long: Homoserine kinase (316 aa).

Belongs to the pseudomonas-type ThrB family.

The enzyme catalyses L-homoserine + ATP = O-phospho-L-homoserine + ADP + H(+). The protein operates within amino-acid biosynthesis; L-threonine biosynthesis; L-threonine from L-aspartate: step 4/5. In Pseudomonas aeruginosa (strain UCBPP-PA14), this protein is Homoserine kinase.